Consider the following 496-residue polypeptide: Probable CtpA-like serine protease (496 aa).

Residues 1-16 are compositionally biased toward basic and acidic residues; that stretch reads MDDKQHTSSSDDERAE. A disordered region spans residues 1-27; the sequence is MDDKQHTSSSDDERAEIATSNQDQQTN. The segment covering 18–27 has biased composition (polar residues); sequence ATSNQDQQTN. A helical transmembrane segment spans residues 39–59; sequence FISILIGTILITAVITVVAYI. The PDZ domain maps to 124-206; that stretch reads TKSFNEGVSG…TEVTLTVQRG (83 aa). Catalysis depends on charge relay system residues Ser329, Asp340, and Lys354.

Belongs to the peptidase S41A family.

The protein localises to the cell membrane. This chain is Probable CtpA-like serine protease, found in Staphylococcus aureus (strain bovine RF122 / ET3-1).